The primary structure comprises 179 residues: MGILFTRIWRLFNHQEHKVIIVGLDNAGKTTILYQFSMNEVVHTSPTIGSNVEEIVVNNTRFLMWDIGGQESLRPSWNTYYTNTEFVIVVVDSTDRERISVTREELYKMLAHEDLRKAGLLIFANKQDVKECMTVAEISQFLKLTSIKDHQWHIQACCALTGEGLCQGLEWMMSRLKIR.

The N-myristoyl glycine moiety is linked to residue G2. GTP contacts are provided by residues 23-30 (GLDNAGKT), 66-70 (DIGGQ), 125-128 (NKQD), and A159.

Belongs to the small GTPase superfamily. Arf family.

Its function is as follows. Lacks ADP-ribosylation enhancing activity. The polypeptide is ADP-ribosylation factor-like protein 5A (Arl5a) (Mus musculus (Mouse)).